Consider the following 243-residue polypeptide: ADP-ribosylation factor-like protein 10 (243 aa).

GTP is bound by residues 83–90 (GLDGSGKS), 127–131 (EIGGS), and 184–187 (NKQD).

Belongs to the small GTPase superfamily. Arf family.

The chain is ADP-ribosylation factor-like protein 10 (Arl10) from Mus musculus (Mouse).